The sequence spans 343 residues: RNA 3'-terminal phosphate cyclase (343 aa).

Residues glutamine 102 and 284-288 (FLGDQ) each bind ATP. The active-site Tele-AMP-histidine intermediate is the histidine 308.

Belongs to the RNA 3'-terminal cyclase family. Type 1 subfamily.

Its subcellular location is the cytoplasm. It catalyses the reaction a 3'-end 3'-phospho-ribonucleotide-RNA + ATP = a 3'-end 2',3'-cyclophospho-ribonucleotide-RNA + AMP + diphosphate. In terms of biological role, catalyzes the conversion of 3'-phosphate to a 2',3'-cyclic phosphodiester at the end of RNA. The mechanism of action of the enzyme occurs in 3 steps: (A) adenylation of the enzyme by ATP; (B) transfer of adenylate to an RNA-N3'P to produce RNA-N3'PP5'A; (C) and attack of the adjacent 2'-hydroxyl on the 3'-phosphorus in the diester linkage to produce the cyclic end product. The biological role of this enzyme is unknown but it is likely to function in some aspects of cellular RNA processing. The chain is RNA 3'-terminal phosphate cyclase (rtcA) from Thermococcus kodakarensis (strain ATCC BAA-918 / JCM 12380 / KOD1) (Pyrococcus kodakaraensis (strain KOD1)).